Consider the following 190-residue polypeptide: Small ribosomal subunit protein mS23 (190 aa).

An N-acetylalanine modification is found at Ala2. Position 83 is an N6-succinyllysine (Lys83). At Lys102 the chain carries N6-acetyllysine. Residues 137–190 are disordered; sequence KARTQQEGSQVSRKSESMGVESQTALEENPPLKEVPQAQHLESPGEESKGLSPP.

The protein belongs to the mitochondrion-specific ribosomal protein mS23 family. As to quaternary structure, component of the mitochondrial ribosome small subunit (28S) which comprises a 12S rRNA and about 30 distinct proteins.

It is found in the mitochondrion. This chain is Small ribosomal subunit protein mS23, found in Bos taurus (Bovine).